Reading from the N-terminus, the 212-residue chain is Large ribosomal subunit protein uL3 (212 aa).

At Gln-153 the chain carries N5-methylglutamine.

Belongs to the universal ribosomal protein uL3 family. In terms of assembly, part of the 50S ribosomal subunit. Forms a cluster with proteins L14 and L19. Methylated by PrmB.

One of the primary rRNA binding proteins, it binds directly near the 3'-end of the 23S rRNA, where it nucleates assembly of the 50S subunit. The protein is Large ribosomal subunit protein uL3 of Shewanella frigidimarina (strain NCIMB 400).